A 1028-amino-acid chain; its full sequence is Unconventional myosin-Ic (1028 aa).

Met-1 bears the N-acetylmethionine mark. One can recognise a Myosin motor domain in the interval 12 to 696; it reads GVQDFVLLEN…TLFATEDALE (685 aa). Residues Asn-53, Tyr-61, 104–113, and 157–161 contribute to the ATP site; these read SGESGAGKTE and NDNSS. The residue at position 348 (Lys-348) is an N6-methyllysine. Residues 573–595 form an actin-binding region; sequence LSKLMEILMSKEPSYIRCIKPND. 2 consecutive IQ domains span residues 699 to 728 and 722 to 751; these read KQSL…SAIA and MKHS…AVQT. Positions 850–1024 constitute a TH1 domain; that stretch reads KDNYPQSVPR…NGHLTVVAPR (175 aa).

This sequence belongs to the TRAFAC class myosin-kinesin ATPase superfamily. Myosin family. In terms of assembly, interacts (via its IQ motifs) with CALM.

It is found in the cytoplasm. It localises to the cell cortex. Its subcellular location is the cell projection. The protein resides in the ruffle membrane. The protein localises to the cytoplasmic vesicle. It is found in the stereocilium membrane. Myosins are actin-based motor molecules with ATPase activity. Unconventional myosins serve in intracellular movements. Their highly divergent tails are presumed to bind to membranous compartments, which would be moved relative to actin filaments. In Gallus gallus (Chicken), this protein is Unconventional myosin-Ic (MYO1C).